A 488-amino-acid polypeptide reads, in one-letter code: Cis-aconitate decarboxylase (488 aa).

Belongs to the PrpD family. As to quaternary structure, homodimer. In terms of tissue distribution, expressed in LPS-tolerized macrophages (at protein level). Expressed in the luminal epithelial cells of pregnant uterus. Expressed in microglia and macrophage cells.

It is found in the mitochondrion. The enzyme catalyses cis-aconitate + H(+) = itaconate + CO2. Functionally, cis-aconitate decarboxylase that catalyzes production of itaconate and is involved in the inhibition of the inflammatory response. Acts as a negative regulator of the Toll-like receptors (TLRs)-mediated inflammatory innate response by stimulating the tumor necrosis factor alpha-induced protein TNFAIP3 expression via reactive oxygen species (ROS) in LPS-tolerized macrophages. Involved in antimicrobial response of innate immune cells; ACOD1-mediated itaconic acid production contributes to the antimicrobial activity of macrophages by generating itaconate, leading to alkylation of proteins, such as TFEB. Involved in antiviral response following infection by flavivirus in neurons: ACOD1-mediated itaconate production inhibits the activity of succinate dehydrogenase, generating a metabolic state in neurons that suppresses replication of viral genomes. Plays a role in the embryo implantation. The protein is Cis-aconitate decarboxylase of Mus musculus (Mouse).